The sequence spans 513 residues: ATP synthase subunit alpha (513 aa).

Residue 169–176 (GDRQIGKT) coordinates ATP.

The protein belongs to the ATPase alpha/beta chains family. In terms of assembly, F-type ATPases have 2 components, CF(1) - the catalytic core - and CF(0) - the membrane proton channel. CF(1) has five subunits: alpha(3), beta(3), gamma(1), delta(1), epsilon(1). CF(0) has three main subunits: a(1), b(2) and c(9-12). The alpha and beta chains form an alternating ring which encloses part of the gamma chain. CF(1) is attached to CF(0) by a central stalk formed by the gamma and epsilon chains, while a peripheral stalk is formed by the delta and b chains.

Its subcellular location is the cell inner membrane. It catalyses the reaction ATP + H2O + 4 H(+)(in) = ADP + phosphate + 5 H(+)(out). Its function is as follows. Produces ATP from ADP in the presence of a proton gradient across the membrane. The alpha chain is a regulatory subunit. This is ATP synthase subunit alpha from Shewanella piezotolerans (strain WP3 / JCM 13877).